Consider the following 326-residue polypeptide: Phospho-N-acetylmuramoyl-pentapeptide-transferase (326 aa).

The next 9 membrane-spanning stretches (helical) occupy residues 3–23 (ISISAGIVTFLLTLVGIPAFI), 51–71 (TMGGLIFLIAAVVVSFLVALF), 79–99 (VGMILFILVLYGLVGFLDDFL), 115–135 (LALQLLGGVIFYLFYERGGDM), 138–158 (IFGYQVHLGIFYIVFALFWLV), 169–189 (GIDGLASISVVISLSAYGVIA), 195–215 (MDILLVILAMIGGLLGFFVFN), 221–243 (VFMGDVGSLALGGMLAAISMALH), and 304–324 (VDFFFWGVGLLASLLTLAILY).

It belongs to the glycosyltransferase 4 family. MraY subfamily. The cofactor is Mg(2+).

Its subcellular location is the cell membrane. It carries out the reaction UDP-N-acetyl-alpha-D-muramoyl-L-alanyl-gamma-D-glutamyl-L-lysyl-D-alanyl-D-alanine + di-trans,octa-cis-undecaprenyl phosphate = Mur2Ac(oyl-L-Ala-gamma-D-Glu-L-Lys-D-Ala-D-Ala)-di-trans,octa-cis-undecaprenyl diphosphate + UMP. It participates in cell wall biogenesis; peptidoglycan biosynthesis. Its function is as follows. Catalyzes the initial step of the lipid cycle reactions in the biosynthesis of the cell wall peptidoglycan: transfers peptidoglycan precursor phospho-MurNAc-pentapeptide from UDP-MurNAc-pentapeptide onto the lipid carrier undecaprenyl phosphate, yielding undecaprenyl-pyrophosphoryl-MurNAc-pentapeptide, known as lipid I. In Streptococcus pneumoniae (strain Hungary19A-6), this protein is Phospho-N-acetylmuramoyl-pentapeptide-transferase.